The chain runs to 277 residues: MPELPEVETTRRGLAPLLEGRRVTGMTVRQARLRWPVPAGLPDAITGQTIRAVDRRAKYLLFRTPAGTLILHLGMSGSLRVIPGQQAGACAVPPGRHDHVDLRLADGSCLRYTDPRRFGSLHWCTGEPEAHWLLHRLGPEPFDTAFDGDRLHRLSRGRRTSVKAFIMDSGIVVGVGNIYASESLFRAGIHPGRPAGRVGLARYRRLAGAVREVLAEAIAAGGTTLRDFTASDGRPGYFAQTLNVYGRAGAPCPRCGRSIRQRRIAQRSTWYCPGCQR.

The active-site Schiff-base intermediate with DNA is proline 2. The Proton donor role is filled by glutamate 3. The active-site Proton donor; for beta-elimination activity is lysine 58. DNA contacts are provided by histidine 97, arginine 116, and arginine 158. Residues 243-277 form an FPG-type zinc finger; sequence NVYGRAGAPCPRCGRSIRQRRIAQRSTWYCPGCQR. Arginine 267 functions as the Proton donor; for delta-elimination activity in the catalytic mechanism.

It belongs to the FPG family. As to quaternary structure, monomer. It depends on Zn(2+) as a cofactor.

It carries out the reaction Hydrolysis of DNA containing ring-opened 7-methylguanine residues, releasing 2,6-diamino-4-hydroxy-5-(N-methyl)formamidopyrimidine.. The enzyme catalyses 2'-deoxyribonucleotide-(2'-deoxyribose 5'-phosphate)-2'-deoxyribonucleotide-DNA = a 3'-end 2'-deoxyribonucleotide-(2,3-dehydro-2,3-deoxyribose 5'-phosphate)-DNA + a 5'-end 5'-phospho-2'-deoxyribonucleoside-DNA + H(+). In terms of biological role, involved in base excision repair of DNA damaged by oxidation or by mutagenic agents. Acts as a DNA glycosylase that recognizes and removes damaged bases. Has a preference for oxidized purines, such as 7,8-dihydro-8-oxoguanine (8-oxoG). Has AP (apurinic/apyrimidinic) lyase activity and introduces nicks in the DNA strand. Cleaves the DNA backbone by beta-delta elimination to generate a single-strand break at the site of the removed base with both 3'- and 5'-phosphates. The chain is Formamidopyrimidine-DNA glycosylase from Alkalilimnicola ehrlichii (strain ATCC BAA-1101 / DSM 17681 / MLHE-1).